The chain runs to 231 residues: Large ribosomal subunit protein uL1 (231 aa).

Belongs to the universal ribosomal protein uL1 family. In terms of assembly, part of the 50S ribosomal subunit.

Its function is as follows. Binds directly to 23S rRNA. The L1 stalk is quite mobile in the ribosome, and is involved in E site tRNA release. In terms of biological role, protein L1 is also a translational repressor protein, it controls the translation of the L11 operon by binding to its mRNA. In Alcanivorax borkumensis (strain ATCC 700651 / DSM 11573 / NCIMB 13689 / SK2), this protein is Large ribosomal subunit protein uL1.